Reading from the N-terminus, the 818-residue chain is MAAFSVNGQLIPTATSSTASTSLSSRRKFLSPSSSRLPRISTQSPRVPSIKCSKSLPNRDTETSSKDSLLKNLAKPLAVASVSSAASFFLFRISNLPSVLTGGGGGGDGNFGGFGGGGGGGDGNDGGFWGKLFSPSPAVADEEQSPDWDSHGLPANIVVQLNKLSGFKKYKVSDIMFFDRRRQTTIGTEDSFFEMVSIRPGGVYTKAQLQKELETLATCGMFEKVDLEGKTKPDGTLGVTISFAESTWQSADRFRCINVGLMVQSKPIEMDSDMTDKEKLEYYRSLEKDYKRRIDRARPCLLPAPVYGEVMQMLRDQGKVSARLLQRIRDRVQKWYHDEGYACAQVVNFGNLNTKEVVCEVVEGDITQLVIQFQDKLGNVVEGNTQVPVVRRELPKQLRQGYVFNIEAGKKALSNINSLGLFSNIEVNPRPDEKNEGGIIVEIKLKELEQKSAEVSTEWSIVPGRGGAPTLASFQPGGSVTFEHRNLQGLNRSLMGSVTTSNFLNPQDDLSFKLEYVHPYLDGVYNPRNRTFKTSCFNSRKLSPVFTGGPGVEEVPPIWVDRAGVKANITENFTRQSKFTYGLVMEEITTRDESSHIAANGQRLLPSGGISADGPPTTLSGTGVDRMAFLQANITRDNTKFVNGAVVGQRTVFQVDQGLGIGSKFPFFNRHQLTMTKFIQLREVEQGAGKSPPPVLVLHGHYGGCVGDLPSYDAFVLGGPYSVRGYNMGELGAARNIAEVGAEIRIPVKNTHVYAFVEHGNDLGSSKDVKGNPTAVYRRTGQGSSYGAGVKLGLVRAEYAVDHNNGTGALFFRFGERY.

The N-terminal 79 residues, 1–79 (MAAFSVNGQL…LKNLAKPLAV (79 aa)), are a transit peptide targeting the chloroplast. Residues 15 to 41 (TSSTASTSLSSRRKFLSPSSSRLPRIS) show a composition bias toward low complexity. The tract at residues 15–67 (TSSTASTSLSSRRKFLSPSSSRLPRISTQSPRVPSIKCSKSLPNRDTETSSKD) is disordered. Residues 57 to 67 (PNRDTETSSKD) are compositionally biased toward basic and acidic residues. The transit peptide at 80–140 (ASVSSAASFF…KLFSPSPAVA (61 aa)) directs the protein to the chloroplast; outer membrane. 3 consecutive POTRA domains span residues 141-246 (DEEQ…FAES), 247-364 (TWQS…VVEG), and 365-448 (DITQ…LKEL). Over 141–473 (DEEQSPDWDS…GRGGAPTLAS (333 aa)) the chain is Chloroplast intermembrane. A beta stranded membrane pass occupies residues 474-482 (FQPGGSVTF). The Cytoplasmic portion of the chain corresponds to 483–509 (EHRNLQGLNRSLMGSVTTSNFLNPQDD). The chain crosses the membrane as a beta stranded span at residues 510–518 (LSFKLEYVH). The Chloroplast intermembrane portion of the chain corresponds to 519-562 (PYLDGVYNPRNRTFKTSCFNSRKLSPVFTGGPGVEEVPPIWVDR). A beta stranded transmembrane segment spans residues 563–570 (AGVKANIT). The Cytoplasmic portion of the chain corresponds to 571–578 (ENFTRQSK). Residues 579–586 (FTYGLVME) form a beta stranded membrane-spanning segment. Residues 587–693 (EITTRDESSH…VEQGAGKSPP (107 aa)) are Chloroplast intermembrane-facing. A beta stranded transmembrane segment spans residues 694–702 (PVLVLHGHY). Topologically, residues 703–714 (GGCVGDLPSYDA) are cytoplasmic. A beta stranded transmembrane segment spans residues 715–723 (FVLGGPYSV). The Chloroplast intermembrane segment spans residues 724 to 785 (RGYNMGELGA…VYRRTGQGSS (62 aa)). The beta stranded transmembrane segment at 786-792 (YGAGVKL) threads the bilayer. The Cytoplasmic portion of the chain corresponds to 793–806 (GLVRAEYAVDHNNG). A beta stranded membrane pass occupies residues 807–814 (TGALFFRF). Residues 815 to 818 (GERY) are Chloroplast intermembrane-facing.

Belongs to the TOC75 family. As to quaternary structure, part of the TOC core complex that includes a protein for the specific recognition of transit peptides surrounded by a ring composed of four proteins forming translocation channels, and four to five GTP-binding proteins providing energy. This core complex can interact with components of the TIC complex to form a larger import complex. Chloroplastic protein precursors such as prSS (precursor of the RuBisCO small subunit) also interact with these complexes. The TOC complex contains a specific subset of polar lipids such as digalactosyldiacylglyceride (DGDG), phosphatidylcholine (PC) and phosphatidylglycerol (PG). TOC75-3 interacts with TOC34/OEP34, TOC159/TOC86, TOC132 and TOC120. Interacts with SP1. Interacts with TIC236. As to expression, mostly expressed in young and actively dividing photosynthetic tissues and, to a lower extent, in old leaves and roots. Particularly low levels in leaves after etiolation.

The protein localises to the plastid. Its subcellular location is the chloroplast outer membrane. In terms of biological role, essential protein. Mediates the insertion of proteins targeted to the outer membrane of chloroplasts. Required for the import of protein precursors into chloroplasts. Forms the voltage-dependent preprotein translocation channels (hydrophilic beta barrel) of the TOC complex in the chloroplastic outer membrane. The sequence is that of Protein TOC75-3, chloroplastic from Arabidopsis thaliana (Mouse-ear cress).